A 216-amino-acid chain; its full sequence is Ribosomal RNA small subunit methyltransferase G (216 aa).

S-adenosyl-L-methionine-binding positions include Gly-86, Leu-91, 137–138 (VE), and Arg-155.

This sequence belongs to the methyltransferase superfamily. RNA methyltransferase RsmG family.

Its subcellular location is the cytoplasm. It catalyses the reaction guanosine(527) in 16S rRNA + S-adenosyl-L-methionine = N(7)-methylguanosine(527) in 16S rRNA + S-adenosyl-L-homocysteine. Functionally, specifically methylates the N7 position of guanine in position 527 of 16S rRNA. This Lawsonia intracellularis (strain PHE/MN1-00) protein is Ribosomal RNA small subunit methyltransferase G.